We begin with the raw amino-acid sequence, 167 residues long: Low molecular mass early light-inducible protein HV60, chloroplastic (167 aa).

Residues 1 to 33 (MATMMAMSSFAGAAVLPRGSARSLPALGRRTLV) constitute a chloroplast transit peptide. Helical transmembrane passes span 101–121 (GQAW…VPLL) and 145–165 (FAMI…TPFI).

The protein belongs to the ELIP/psbS family.

The protein resides in the plastid. The protein localises to the chloroplast membrane. Functionally, probably involved in the integration of pigments into the mature pigment-protein complexes. The chain is Low molecular mass early light-inducible protein HV60, chloroplastic from Hordeum vulgare (Barley).